A 336-amino-acid polypeptide reads, in one-letter code: Pentalenene synthase (336 aa).

Mg(2+) is bound by residues aspartate 80, aspartate 84, asparagine 219, serine 223, and glutamate 227. Positions 80 to 84 match the DDXXD motif motif; it reads DDLFD.

This sequence belongs to the terpene synthase family. Monomer. Requires Mg(2+) as cofactor.

It catalyses the reaction (2E,6E)-farnesyl diphosphate = pentalenene + diphosphate. Its pathway is antibiotic biosynthesis; neopentalenolactone biosynthesis. Its function is as follows. Catalyzes the cyclization of farnesyl diphosphate (FPP) to the tricyclic sesquiterpene pentalenene in the biosynthesis of neopentalenolactone antibiotic. The polypeptide is Pentalenene synthase (ptlA) (Streptomyces avermitilis (strain ATCC 31267 / DSM 46492 / JCM 5070 / NBRC 14893 / NCIMB 12804 / NRRL 8165 / MA-4680)).